Consider the following 467-residue polypeptide: 3-isopropylmalate dehydratase large subunit (467 aa).

[4Fe-4S] cluster contacts are provided by cysteine 347, cysteine 407, and cysteine 410.

Belongs to the aconitase/IPM isomerase family. LeuC type 1 subfamily. Heterodimer of LeuC and LeuD. [4Fe-4S] cluster is required as a cofactor.

It catalyses the reaction (2R,3S)-3-isopropylmalate = (2S)-2-isopropylmalate. Its pathway is amino-acid biosynthesis; L-leucine biosynthesis; L-leucine from 3-methyl-2-oxobutanoate: step 2/4. In terms of biological role, catalyzes the isomerization between 2-isopropylmalate and 3-isopropylmalate, via the formation of 2-isopropylmaleate. This is 3-isopropylmalate dehydratase large subunit from Picosynechococcus sp. (strain ATCC 27264 / PCC 7002 / PR-6) (Agmenellum quadruplicatum).